The sequence spans 422 residues: 5'-deoxyadenosine deaminase (422 aa).

Residues His-57 and His-59 each coordinate Zn(2+). Glu-86 and His-178 together coordinate substrate. His-205 provides a ligand contact to Zn(2+). Residues Glu-208 and Asp-294 each contribute to the substrate site. Asp-294 provides a ligand contact to Zn(2+).

This sequence belongs to the metallo-dependent hydrolases superfamily. MTA/SAH deaminase family. Homotetramer. Zn(2+) serves as cofactor.

It carries out the reaction 5'-deoxyadenosine + H2O + H(+) = 5'-deoxyinosine + NH4(+). It catalyses the reaction S-adenosyl-L-homocysteine + H2O + H(+) = S-inosyl-L-homocysteine + NH4(+). The enzyme catalyses S-methyl-5'-thioadenosine + H2O + H(+) = S-methyl-5'-thioinosine + NH4(+). The catalysed reaction is adenosine + H2O + H(+) = inosine + NH4(+). Its pathway is amino-acid biosynthesis; S-adenosyl-L-methionine biosynthesis. In terms of biological role, catalyzes the deamination of three SAM-derived enzymatic products, namely 5'-deoxyadenosine, S-adenosyl-L-homocysteine, and 5'-methylthioadenosine, to produce the inosine analogs. Can also deaminate adenosine. The preferred substrate for this enzyme is 5'-deoxyadenosine, but all these substrates are efficiently deaminated. Likely functions in a S-adenosyl-L-methionine (SAM) recycling pathway from S-adenosyl-L-homocysteine (SAH) produced from SAM-dependent methylation reactions. May also be involved in the recycling of 5'-deoxyadenosine, whereupon the 5'-deoxyribose moiety of 5'-deoxyinosine is further metabolized to deoxyhexoses used for the biosynthesis of aromatic amino acids in methanogens. The protein is 5'-deoxyadenosine deaminase of Methanococcus maripaludis (strain DSM 14266 / JCM 13030 / NBRC 101832 / S2 / LL).